The sequence spans 321 residues: Protein ZAR1-like (321 aa).

Positions 110-214 (RTLSSCSPWD…GDAASEPLRR (105 aa)) are disordered. The span at 145-154 (LRRDGDEAES) shows a compositional bias: basic and acidic residues. Residues 222–307 (PKYGYFHCKD…QELCGRCKDK (86 aa)) form a 3CxxC-type zinc finger.

The protein belongs to the ZAR1 family. In terms of assembly, interacts with YBX2.

Its subcellular location is the cytoplasm. It localises to the cytoplasmic ribonucleoprotein granule. Its function is as follows. mRNA-binding protein required for maternal mRNA storage, translation and degradation during oocyte maturation. Probably promotes formation of some phase-separated membraneless compartment that stores maternal mRNAs in oocytes: acts by undergoing liquid-liquid phase separation upon binding to maternal mRNAs. Binds to the 3'-UTR of maternal mRNAs, inhibiting their translation. This is Protein ZAR1-like from Homo sapiens (Human).